The sequence spans 722 residues: Neprilysin-1 (722 aa).

An N-terminal signal peptide occupies residues 1–17 (MAVALLVALCVVSSRMA). The Peptidase M13 domain occupies 32-722 (VCNSPVCQKA…MNPTHKCLLW (691 aa)). Intrachain disulfides connect cysteine 33-cysteine 38, cysteine 56-cysteine 707, cysteine 64-cysteine 667, cysteine 120-cysteine 378, and cysteine 589-cysteine 719. Asparagine 100, asparagine 184, asparagine 207, and asparagine 424 each carry an N-linked (GlcNAc...) asparagine glycan. Histidine 552 contacts Zn(2+). Glutamate 553 is an active-site residue. Histidine 556 is a binding site for Zn(2+). Residue asparagine 609 is glycosylated (N-linked (GlcNAc...) asparagine). Glutamate 614 contacts Zn(2+). Aspartate 618 functions as the Proton donor in the catalytic mechanism.

Belongs to the peptidase M13 family. Requires Zn(2+) as cofactor. Post-translationally, contains 5 disulfide bonds. Expressed by the venom gland.

The protein resides in the secreted. In Trittame loki (Brush-footed trapdoor spider), this protein is Neprilysin-1.